Reading from the N-terminus, the 263-residue chain is Ret finger protein-like 4B (263 aa).

The RING-type zinc finger occupies 11 to 53 (CPVCLDFFSCSISLSCTHVFCFDCIQRYILENHDFRAMCPLCR). In terms of domain architecture, B30.2/SPRY spans 76-263 (HNSRLEQSLH…ESGNVLTICP (188 aa)).

The protein is Ret finger protein-like 4B (RFPL4B) of Homo sapiens (Human).